The primary structure comprises 256 residues: MTNIIVNSPLDQFDIKVFIGFVSPFIDLTNINITTFTVYSVFILIVILGLTLLTDNNGRIIGNRWYVSQEAMYDTINNMVSGQIGGKLGGYYFPLIYTFFIFIFTANLIGMIPYSFAITSHMVFIISLSVVIWLGVTIIGLYTHGLTFFALFVPAGCPLALAPLLVLIELLSYSARAISLGLRLSANTLSGHLLMVILGGLVFNLMSVSIVTFVLGFIPLAGILAIVALEFAIAMIQSYVFAILASGYIKDGLYLH.

Helical transmembrane passes span 33–53, 92–112, 122–142, 148–168, 191–211, and 235–255; these read ITTF…LTLL, YFPL…IGMI, MVFI…IGLY, FFAL…LVLI, GHLL…VSIV, and MIQS…GLYL.

It belongs to the ATPase A chain family. As to quaternary structure, F-type ATPases have 2 components, CF(1) - the catalytic core - and CF(0) - the membrane proton channel. CF(1) has five subunits: alpha(3), beta(3), gamma(1), delta(1), epsilon(1). CF(0) has three main subunits: a, b and c.

It is found in the mitochondrion inner membrane. Functionally, mitochondrial membrane ATP synthase (F(1)F(0) ATP synthase or Complex V) produces ATP from ADP in the presence of a proton gradient across the membrane which is generated by electron transport complexes of the respiratory chain. F-type ATPases consist of two structural domains, F(1) - containing the extramembraneous catalytic core and F(0) - containing the membrane proton channel, linked together by a central stalk and a peripheral stalk. During catalysis, ATP synthesis in the catalytic domain of F(1) is coupled via a rotary mechanism of the central stalk subunits to proton translocation. Key component of the proton channel; it may play a direct role in the translocation of protons across the membrane. This Wickerhamomyces canadensis (Yeast) protein is ATP synthase subunit a (ATP6).